The primary structure comprises 2227 residues: Genome polyprotein (2227 aa).

Short sequence motifs ((L)YPX(n)L motif) lie at residues 167–171 and 200–205; these read YPHGL and YPVWEL. The tract at residues 766–836 is involved in P1-2A pentamerization; sequence MMSRIAAGDL…PRKMKGLFSQ (71 aa). The helical transmembrane segment at 1011-1031 threads the bilayer; that stretch reads TVEIINTVLCFVKSGILLYVI. Residues 1043–1070 form a membrane-penetrating ability region; the sequence is IGLLRVMNYADIGCSVISCGKVFSKMLE. The SF3 helicase domain maps to 1204–1366; it reads HQKLKNLGSI…SFFKNPHNDM (163 aa). 1230 to 1237 contributes to the ATP binding site; sequence GKRGGGKS. The chain crosses the membrane as a helical span at residues 1462–1482; the sequence is WVAVGAAVGILGVLVGGWFVY. Tyrosine 1499 carries the post-translational modification O-(5'-phospho-RNA)-tyrosine. Positions 1514–1728 constitute a Peptidase C3 domain; the sequence is DPVESQSTLE…VAKLVTQEMF (215 aa). Active-site for protease 3C activity residues include histidine 1563, aspartate 1603, and cysteine 1691. Residues 1976–2097 form the RdRp catalytic domain; it reads DVGLDLDFSA…VFSRDVQIDN (122 aa).

Belongs to the picornaviridae polyprotein family. As to quaternary structure, homodimer. Homomultimer; probably interacts with membranes in a multimeric form. Seems to assemble into amyloid-like fibers. In terms of assembly, interacts with host ACBD3. Homodimer. Monomer. Interacts with protein 3CD. As to quaternary structure, interacts with protein 3AB. In terms of assembly, interacts with human MAVS. Homodimer; disulfide-linked. As to quaternary structure, homopentamer. Homooligomer. In terms of assembly, interacts with capsid protein VP2. Interacts with capsid protein VP3. Interacts with capsid protein VP1. Interacts with capsid protein VP3. As to quaternary structure, interacts with capsid protein VP1. Interacts with capsid protein VP2. Post-translationally, specific enzymatic cleavages by viral protease in vivo yield a variety of precursors and mature proteins. Polyprotein processing intermediates are produced, such as P1-2A which is a functional precursor of the structural proteins, VP0 which is a VP4-VP2 precursor, VP1-2A precursor, 3ABC precursor which is a stable and catalytically active precursor of 3A, 3B and 3C proteins, 3AB and 3CD precursors. The assembly signal 2A is removed from VP1-2A by a host protease, possibly host Cathepsin L. This cleavage occurs over a region of 3 amino-acids probably generating VP1 proteins with heterogeneous C-termini. In terms of processing, during virion maturation, immature virions are rendered infectious following cleavage of VP0 into VP4 and VP2. This maturation seems to be an autocatalytic event triggered by the presence of RNA in the capsid and is followed by a conformational change of the particle. The assembly signal 2A is removed from VP1-2A by a host protease, possibly host Cathepsin L in naked virions. This cleavage does not occur in enveloped virions. This cleavage occurs over a region of 3 amino-acids probably generating VP1 proteins with heterogeneous C-termini. Post-translationally, VPg is uridylylated prior to priming replication into VPg-pUpU. In terms of processing, unlike other picornaviruses, does not seem to be myristoylated.

Its subcellular location is the virion. It localises to the host endosome. The protein resides in the host multivesicular body. The protein localises to the host membrane. It is found in the host mitochondrion outer membrane. Its subcellular location is the host cytoplasm. It localises to the host cytoplasmic vesicle membrane. The catalysed reaction is RNA(n) + a ribonucleoside 5'-triphosphate = RNA(n+1) + diphosphate. The enzyme catalyses a ribonucleoside 5'-triphosphate + H2O = a ribonucleoside 5'-diphosphate + phosphate + H(+). It carries out the reaction Selective cleavage of Gln-|-Gly bond in the poliovirus polyprotein. In other picornavirus reactions Glu may be substituted for Gln, and Ser or Thr for Gly.. Functionally, capsid proteins VP1, VP2, and VP3 form a closed capsid enclosing the viral positive strand RNA genome. All these proteins contain a beta-sheet structure called beta-barrel jelly roll. Together they form an icosahedral capsid (T=3) composed of 60 copies of each VP1, VP2, and VP3, with a diameter of approximately 300 Angstroms. VP1 is situated at the 12 fivefold axes, whereas VP2 and VP3 are located at the quasi-sixfold axes. The naked capsid interacts with the host receptor HAVCR1 to provide virion attachment to and probably entry into the target cell. VP0 precursor is a component of the immature procapsids. In terms of biological role, plays a role in the assembly of the 12 pentamers into an icosahedral structure. Has not been detected in mature virions, supposedly owing to its small size. Its function is as follows. Precursor component of immature procapsids that corresponds to an extended form of the structural protein VP1. After maturation, possibly by the host Cathepsin L, the assembly signal 2A is cleaved to give rise to the mature VP1 protein. Functionally, functions as a viroporin. Affects membrane integrity and causes an increase in membrane permeability. Involved in host intracellular membrane rearrangements probably to give rise to the viral factories. Does not disrupt calcium homeostasis or glycoprotein trafficking. Antagonizes the innate immune response of the host by suppressing IFN-beta synthesis, which it achieves by interfering with the RIG-I/IFIH1 pathway. Affects membrane integrity and causes an increase in membrane permeability. In terms of biological role, associates with and induces structural rearrangements of intracellular membranes. Displays RNA-binding activity. Its function is as follows. The precursor 3ABC is targeted to the mitochondrial membrane where protease 3C activity cleaves and inhibits the host antiviral protein MAVS, thereby disrupting activation of IRF3 through the IFIH1/MDA5 pathway. In vivo, the protease activity of 3ABC precursor is more efficient in cleaving the 2BC precursor than that of protein 3C. The 3ABC precursor may therefore play a role in the proteolytic processing of the polyprotein. Functionally, interacts with the 3CD precursor and with RNA structures found at both the 5'- and 3'-termini of the viral genome. Since the 3AB precursor contains the hydrophobic domain 3A, it probably anchors the whole viral replicase complex to intracellular membranes on which viral RNA synthesis occurs. May serve as membrane anchor to the 3AB and 3ABC precursors via its hydrophobic domain. May interact with RNA. In terms of biological role, acts as a primer for viral RNA replication and remains covalently bound to viral genomic RNA. VPg is uridylylated prior to priming replication into VPg-pUpU. The VPg-pUpU is then used as primer on the genomic RNA poly(A) by the RNA-dependent RNA polymerase to replicate the viral genome. Its function is as follows. Cysteine protease that generates mature viral proteins from the precursor polyprotein. In addition to its proteolytic activity, it binds to viral RNA, and thus influences viral genome replication. RNA and substrate bind cooperatively to the protease. Cleaves IKBKG/NEMO to impair innate immune signaling. Cleaves host PABPC1 which may participate in the switch of viral translation to RNA synthesis. Functionally, interacts with the 3AB precursor and with RNA structures found at both the 5'- and 3'-termini of the viral genome. Disrupts TLR3 signaling by degrading the host adapter protein TICAM1/TRIF. RNA-directed RNA polymerase 3D-POL replicates genomic and antigenomic RNA by recognizing replications specific signals. The sequence is that of Genome polyprotein from Human hepatitis A virus genotype IB (isolate HM175) (HHAV).